A 321-amino-acid polypeptide reads, in one-letter code: GDP-L-fucose synthase (321 aa).

14–20 (GGSGLVG) contacts NADP(+). Y143 functions as the Proton donor/acceptor in the catalytic mechanism. Residues K147, 170-173 (PTNV), and H186 each bind NADP(+). K194, W208, R215, and D277 together coordinate substrate.

It belongs to the NAD(P)-dependent epimerase/dehydratase family. Fucose synthase subfamily. Homodimer.

The enzyme catalyses GDP-beta-L-fucose + NADP(+) = GDP-4-dehydro-alpha-D-rhamnose + NADPH + H(+). Its pathway is nucleotide-sugar biosynthesis; GDP-L-fucose biosynthesis via de novo pathway; GDP-L-fucose from GDP-alpha-D-mannose: step 2/2. Its function is as follows. Catalyzes the two-step NADP-dependent conversion of GDP-4-dehydro-6-deoxy-D-mannose to GDP-fucose, involving an epimerase and a reductase reaction. The chain is GDP-L-fucose synthase from Mus musculus (Mouse).